Reading from the N-terminus, the 643-residue chain is 1-deoxy-D-xylulose-5-phosphate synthase (643 aa).

Thiamine diphosphate is bound by residues His-71 and 112–114 (SHA). Asp-144 is a binding site for Mg(2+). Residues 145–146 (GA), Asn-173, Tyr-284, and Glu-365 contribute to the thiamine diphosphate site. Asn-173 serves as a coordination point for Mg(2+).

It belongs to the transketolase family. DXPS subfamily. Homodimer. It depends on Mg(2+) as a cofactor. The cofactor is thiamine diphosphate.

It catalyses the reaction D-glyceraldehyde 3-phosphate + pyruvate + H(+) = 1-deoxy-D-xylulose 5-phosphate + CO2. It functions in the pathway metabolic intermediate biosynthesis; 1-deoxy-D-xylulose 5-phosphate biosynthesis; 1-deoxy-D-xylulose 5-phosphate from D-glyceraldehyde 3-phosphate and pyruvate: step 1/1. In terms of biological role, catalyzes the acyloin condensation reaction between C atoms 2 and 3 of pyruvate and glyceraldehyde 3-phosphate to yield 1-deoxy-D-xylulose-5-phosphate (DXP). In Mycobacterium leprae (strain Br4923), this protein is 1-deoxy-D-xylulose-5-phosphate synthase.